The primary structure comprises 1601 residues: Ras guanine nucleotide exchange factor glfB (1601 aa).

4 disordered regions span residues 43 to 140, 188 to 256, 310 to 461, and 475 to 630; these read PLLA…KEWD, DLLI…TTTT, SPQR…APDS, and LTTT…VKKG. The segment covering 45 to 55 has biased composition (pro residues); sequence LAPPAPPPPPT. Polar residues predominate over residues 57–69; it reads QEINIGSGNSTFI. The segment covering 70–126 has biased composition (low complexity); sequence SSNNNNSNNNNNNNSNNNNNNNLNNSNNNNNNLNSNNNNNNNNNNNNNNGNNNNNSN. At Ser197 the chain carries Phosphoserine. Thr201 is modified (phosphothreonine). Composition is skewed to low complexity over residues 211 to 256 and 310 to 330; these read QQQQ…TTTT and SPQRVTTTTTTTTPSTGGVVV. Over residues 331–359 the composition is skewed to acidic residues; it reads ADEESDSSEEESDSSEEESDEYTDEESET. The segment covering 384 to 398 has biased composition (polar residues); the sequence is PLTSVNSNDNTSSGT. Composition is skewed to low complexity over residues 435 to 458, 475 to 493, and 500 to 520; these read TAVAASSISATTNVTSAASTTTVA, LTTTTSATSSTTSATTQSI, and SQQRAAQSISTSSVTPAAITK. The segment covering 521 to 533 has biased composition (basic and acidic residues); sequence PTKDAKDKKDPAK. The segment covering 558–577 has biased composition (low complexity); sequence VPTGTSPPVSSSTSISSSTG. Positions 578 to 596 are enriched in basic and acidic residues; sequence IKKDKVKLSKEEKDRIKKE. The region spanning 649 to 836 is the Rho-GAP domain; it reads VRLTQLVLSN…LIIDNYVFLF (188 aa). Residues 851 to 983 form the N-terminal Ras-GEF domain; it reads GKMIISEGSI…TINDFLKLPK (133 aa). Residues 1021–1255 enclose the Ras-GEF domain; sequence SAMEIAEQCT…ADLSLKCEPP (235 aa). The N-terminal F-actin-binding domain stretch occupies residues 1262-1601; the sequence is YNAPADIVDE…QESVPSTNAE (340 aa). The interval 1443-1474 is disordered; that stretch reads SNVEKEKLSSSQEQQEQQEQKQQEQQQQQQEP. The span at 1465 to 1474 shows a compositional bias: low complexity; the sequence is QEQQQQQQEP.

Interacts with gpaB and rapA. Interacts directly with F-actin. Post-translationally, simultaneously phosphorylated at Ser-197 and Thr-201 after cAMP stimulation.

The protein resides in the cytoplasm. It is found in the cell cortex. The protein localises to the cytoskeleton. Its subcellular location is the cell projection. It localises to the filopodium. The protein resides in the lamellipodium. Functionally, gpaB-activated, rapA-specific guanine nucleotide exchange factor, involved in the regulation of the balance between Ras and Rap signaling at the leading edge of chemotaxing cells. Spatially localized activation of Rap and Ras induces F-actin polymerization at the leading edge of chemotaxing cells through the Rac, PI3K, and TORC2 pathways. Also acts as a key regulator of actin-driven membrane protrusions during processes such as phagocytosis and cytokinesis, possibly by modulating rapA signaling pathways. This is Ras guanine nucleotide exchange factor glfB from Dictyostelium discoideum (Social amoeba).